A 513-amino-acid chain; its full sequence is NADH-quinone oxidoreductase chain 13 (513 aa).

14 consecutive transmembrane segments (helical) span residues 3–23 (NLLS…ALFL), 34–54 (AKWL…FVLF), 81–101 (VDGI…LTIL), 112–132 (EYMI…TALD), 133–153 (LVLF…IIGI), 164–184 (FKFF…MIAM), 211–231 (MTVV…SFAV), 250–270 (PTAG…YGFL), 277–297 (FPVA…IAIV), 312–332 (VIAY…FAAN), 340–360 (IFQM…VGVI), 383–403 (AAVF…SGFV), 418–438 (WVAL…LWLY), and 463–483 (WVFI…RLVT).

This sequence belongs to the complex I subunit 4 family. In terms of assembly, NDH-1 is composed of at least 14 different subunits, Nqo1 to Nqo14. The complex has a L-shaped structure, with the hydrophobic arm (subunits Nqo7, Nqo8, Nqo10 to Nqo14) embedded in the inner membrane and the hydrophilic peripheral arm (subunits Nqo1 to Nqo6, Nqo9) protruding into the bacterial cytoplasm. The hydrophilic domain contains all the redox centers.

It is found in the cell inner membrane. It catalyses the reaction a quinone + NADH + 5 H(+)(in) = a quinol + NAD(+) + 4 H(+)(out). NDH-1 shuttles electrons from NADH, via FMN and iron-sulfur (Fe-S) centers, to quinones in the respiratory chain. The immediate electron acceptor for the enzyme in this species is believed to be ubiquinone. Couples the redox reaction to proton translocation (for every two electrons transferred, four hydrogen ions are translocated across the cytoplasmic membrane), and thus conserves the redox energy in a proton gradient. The sequence is that of NADH-quinone oxidoreductase chain 13 from Paracoccus denitrificans.